We begin with the raw amino-acid sequence, 165 residues long: Large ribosomal subunit protein uL10 (165 aa).

It belongs to the universal ribosomal protein uL10 family. In terms of assembly, part of the ribosomal stalk of the 50S ribosomal subunit. The N-terminus interacts with L11 and the large rRNA to form the base of the stalk. The C-terminus forms an elongated spine to which L12 dimers bind in a sequential fashion forming a multimeric L10(L12)X complex.

In terms of biological role, forms part of the ribosomal stalk, playing a central role in the interaction of the ribosome with GTP-bound translation factors. This chain is Large ribosomal subunit protein uL10, found in Cronobacter sakazakii (strain ATCC BAA-894) (Enterobacter sakazakii).